A 160-amino-acid chain; its full sequence is SsrA-binding protein (160 aa).

Belongs to the SmpB family.

The protein localises to the cytoplasm. Required for rescue of stalled ribosomes mediated by trans-translation. Binds to transfer-messenger RNA (tmRNA), required for stable association of tmRNA with ribosomes. tmRNA and SmpB together mimic tRNA shape, replacing the anticodon stem-loop with SmpB. tmRNA is encoded by the ssrA gene; the 2 termini fold to resemble tRNA(Ala) and it encodes a 'tag peptide', a short internal open reading frame. During trans-translation Ala-aminoacylated tmRNA acts like a tRNA, entering the A-site of stalled ribosomes, displacing the stalled mRNA. The ribosome then switches to translate the ORF on the tmRNA; the nascent peptide is terminated with the 'tag peptide' encoded by the tmRNA and targeted for degradation. The ribosome is freed to recommence translation, which seems to be the essential function of trans-translation. The chain is SsrA-binding protein from Enterobacter sp. (strain 638).